The sequence spans 317 residues: uncharacterized protein (317 aa).

Residues alanine 11–leucine 31 traverse the membrane as a helical segment. PASTA domains follow at residues asparagine 33 to lysine 100, glycine 101 to lysine 174, and aspartate 180 to lysine 241.

It localises to the membrane. This is an uncharacterized protein from Borreliella burgdorferi (strain ATCC 35210 / DSM 4680 / CIP 102532 / B31) (Borrelia burgdorferi).